A 411-amino-acid chain; its full sequence is Serine hydroxymethyltransferase (411 aa).

Residues Leu119 and 123 to 125 each bind (6S)-5,6,7,8-tetrahydrofolate; that span reads GHL. Lys228 carries the post-translational modification N6-(pyridoxal phosphate)lysine. A (6S)-5,6,7,8-tetrahydrofolate-binding site is contributed by 351 to 353; sequence SPF.

It belongs to the SHMT family. In terms of assembly, homodimer. Pyridoxal 5'-phosphate serves as cofactor.

It localises to the cytoplasm. The enzyme catalyses (6R)-5,10-methylene-5,6,7,8-tetrahydrofolate + glycine + H2O = (6S)-5,6,7,8-tetrahydrofolate + L-serine. It participates in one-carbon metabolism; tetrahydrofolate interconversion. The protein operates within amino-acid biosynthesis; glycine biosynthesis; glycine from L-serine: step 1/1. In terms of biological role, catalyzes the reversible interconversion of serine and glycine with tetrahydrofolate (THF) serving as the one-carbon carrier. This reaction serves as the major source of one-carbon groups required for the biosynthesis of purines, thymidylate, methionine, and other important biomolecules. Also exhibits THF-independent aldolase activity toward beta-hydroxyamino acids, producing glycine and aldehydes, via a retro-aldol mechanism. The sequence is that of Serine hydroxymethyltransferase from Clostridium botulinum (strain Eklund 17B / Type B).